The sequence spans 1122 residues: Desmoglein-2 (1122 aa).

Positions Met1–Gly28 are cleaved as a signal peptide. The propeptide occupies Leu29–Arg54. 4 Cadherin domains span residues Ala55 to Phe164, Thr165 to Val277, Glu278 to Val398, and Val397 to Leu504. At Ala55 to Ala618 the chain is on the extracellular side. A glycan (N-linked (GlcNAc...) asparagine) is linked at Asn117. Asn314, Asn467, and Asn519 each carry an N-linked (GlcNAc...) asparagine glycan. The helical transmembrane segment at Ala619–Ile639 threads the bilayer. Residues Cys640 to Ser1122 are Cytoplasmic-facing. Phosphoserine is present on residues Ser685, Ser706, Ser709, and Ser729. Residue Thr808 is modified to Phosphothreonine. Ser810, Ser814, and Ser819 each carry phosphoserine. 6 Desmoglein repeat repeats span residues Ala885–Val916, Ser917–Lys945, Gly946–Tyr971, Ala972–Ile995, Gln996–Ser1024, and Ile1025–Leu1055. The tract at residues Glu913–Ala932 is disordered. Low complexity predominate over residues Ser914–Val924. A disordered region spans residues Leu1089–Ser1122. Positions Pro1100 to Ser1122 are enriched in polar residues. A Phosphoserine modification is found at Ser1122.

Interacts with PKP2. Interacts with CTNNB1; the interaction promotes localization of CTNNB1 at cell junctions thus reducing its nuclear localization and subsequent transcription of CTNNB1/TCF-target genes. In terms of processing, palmitoylated by ZDHHC5 at the plasma membrane. Expressed in undifferentiated pluripotent stem cells, expression decreases during differentiation (at protein level). Expressed by embryonic stem cells, expression is reduced during differentiation (at protein level). Expressed at the apical-lateral cell membrane of kidney tubular epithelial cells (at protein level). Expressed in epidermis and heart (at protein level). Expressed in the brain, spleen, lung, liver skeletal muscle, kidney and testis.

It is found in the cell membrane. The protein resides in the cell junction. The protein localises to the desmosome. It localises to the cytoplasm. Functionally, a component of desmosome cell-cell junctions which are required for positive regulation of cellular adhesion. Involved in the interaction of plaque proteins and intermediate filaments mediating cell-cell adhesion. Required for proliferation and viability of embryonic stem cells in the blastocyst, thereby crucial for progression of post-implantation embryonic development. Maintains pluripotency by regulating epithelial to mesenchymal transition/mesenchymal to epithelial transition (EMT/MET) via interacting with and sequestering CTNNB1 to sites of cell-cell contact, thereby reducing translocation of CTNNB1 to the nucleus and subsequent transcription of CTNNB1/TCF-target genes. Promotes pluripotency and the multi-lineage differentiation potential of hematopoietic stem cells. Plays a role in endothelial cell sprouting and elongation via mediating the junctional-association of cortical actin fibers and CDH5. Plays a role in limiting inflammatory infiltration and the apoptotic response to injury in kidney tubular epithelial cells, potentially via its role in maintaining cell-cell adhesion and the epithelial barrier. This is Desmoglein-2 (Dsg2) from Mus musculus (Mouse).